The sequence spans 122 residues: Large ribosomal subunit protein uL14 (122 aa).

The protein belongs to the universal ribosomal protein uL14 family. As to quaternary structure, part of the 50S ribosomal subunit. Forms a cluster with proteins L3 and L19. In the 70S ribosome, L14 and L19 interact and together make contacts with the 16S rRNA in bridges B5 and B8.

Binds to 23S rRNA. Forms part of two intersubunit bridges in the 70S ribosome. This chain is Large ribosomal subunit protein uL14, found in Streptomyces coelicolor (strain ATCC BAA-471 / A3(2) / M145).